The chain runs to 339 residues: RNA polymerase II holoenzyme cyclin-like subunit (339 aa).

Residues 48 to 67 (PNSADSSNGNAANNGGGNGR) are disordered. Over residues 49-60 (NSADSSNGNAAN) the composition is skewed to low complexity. In terms of domain architecture, Cyclin N-terminal spans 93–194 (RIYCYFLIMK…LIEELQCYLI (102 aa)).

Belongs to the cyclin family. Cyclin C subfamily. Component of the SRB8-11 complex, a regulatory module of the Mediator complex.

It is found in the nucleus. Its function is as follows. Component of the SRB8-11 complex. The SRB8-11 complex is a regulatory module of the Mediator complex which is itself involved in regulation of basal and activated RNA polymerase II-dependent transcription. The SRB8-11 complex may be involved in the transcriptional repression of a subset of genes regulated by Mediator. It may inhibit the association of the Mediator complex with RNA polymerase II to form the holoenzyme complex. The SRB8-11 complex phosphorylates the C-terminal domain (CTD) of the largest subunit of RNA polymerase II. The polypeptide is RNA polymerase II holoenzyme cyclin-like subunit (SSN8) (Candida glabrata (strain ATCC 2001 / BCRC 20586 / JCM 3761 / NBRC 0622 / NRRL Y-65 / CBS 138) (Yeast)).